The chain runs to 1477 residues: Neuralized-like protein 4 (1477 aa).

2 disordered regions span residues 1–26 (MAEL…RKQP) and 168–196 (QPPP…RPDK). In terms of domain architecture, NHR 1 spans 1–167 (MAELHPRTGK…KCTQITVLSC (167 aa)). Acidic residues predominate over residues 171-183 (PEEEEEEDAEEQE). NHR domains follow at residues 250–417 (ALLF…IVHN), 450–616 (QLLF…IMDE), 645–813 (DLRF…LTGG), and 841–1010 (SHRF…TVSS). The interval 1012–1041 (LLEEPDATKPPSITSESEEEEDPADHGDPH) is disordered. Residues 1048-1211 (SLQFLANHGK…QCEQVSIVTG (164 aa)) form the NHR 6 domain.

Ubiquitinated. This ubiquitination leads to proteasomal degradation.

The protein resides in the cytoplasm. The protein localises to the cytoskeleton. Its subcellular location is the microtubule organizing center. It localises to the centrosome. It is found in the centriole. In terms of biological role, promotes CCP110 ubiquitination and proteasome-dependent degradation. By counteracting accumulation of CP110, maintains normal centriolar homeostasis and preventing formation of ectopic microtubular organizing centers. In Xenopus tropicalis (Western clawed frog), this protein is Neuralized-like protein 4 (neurl4).